The sequence spans 343 residues: S-adenosylmethionine:tRNA ribosyltransferase-isomerase (343 aa).

The protein belongs to the QueA family. In terms of assembly, monomer.

Its subcellular location is the cytoplasm. The catalysed reaction is 7-aminomethyl-7-carbaguanosine(34) in tRNA + S-adenosyl-L-methionine = epoxyqueuosine(34) in tRNA + adenine + L-methionine + 2 H(+). Its pathway is tRNA modification; tRNA-queuosine biosynthesis. Transfers and isomerizes the ribose moiety from AdoMet to the 7-aminomethyl group of 7-deazaguanine (preQ1-tRNA) to give epoxyqueuosine (oQ-tRNA). The chain is S-adenosylmethionine:tRNA ribosyltransferase-isomerase from Geobacter sulfurreducens (strain ATCC 51573 / DSM 12127 / PCA).